The sequence spans 112 residues: Putative pterin-4-alpha-carbinolamine dehydratase (112 aa).

The protein belongs to the pterin-4-alpha-carbinolamine dehydratase family.

It carries out the reaction (4aS,6R)-4a-hydroxy-L-erythro-5,6,7,8-tetrahydrobiopterin = (6R)-L-erythro-6,7-dihydrobiopterin + H2O. This is Putative pterin-4-alpha-carbinolamine dehydratase from Shewanella amazonensis (strain ATCC BAA-1098 / SB2B).